The chain runs to 437 residues: Phosphomethylpyrimidine synthase (437 aa).

Residues N69, M98, Y127, H163, 185–187, 226–229, and E265 each bind substrate; these read SRG and DACR. A Zn(2+)-binding site is contributed by H269. Substrate is bound at residue Y292. H333 lines the Zn(2+) pocket. [4Fe-4S] cluster-binding residues include C409, C412, and C416.

This sequence belongs to the ThiC family. Requires [4Fe-4S] cluster as cofactor.

It carries out the reaction 5-amino-1-(5-phospho-beta-D-ribosyl)imidazole + S-adenosyl-L-methionine = 4-amino-2-methyl-5-(phosphooxymethyl)pyrimidine + CO + 5'-deoxyadenosine + formate + L-methionine + 3 H(+). Its pathway is cofactor biosynthesis; thiamine diphosphate biosynthesis. Functionally, catalyzes the synthesis of the hydroxymethylpyrimidine phosphate (HMP-P) moiety of thiamine from aminoimidazole ribotide (AIR) in a radical S-adenosyl-L-methionine (SAM)-dependent reaction. This is Phosphomethylpyrimidine synthase from Clostridium novyi (strain NT).